The chain runs to 657 residues: Endoplasmic reticulum mannosyl-oligosaccharide 1,2-alpha-mannosidase (657 aa).

Residues 1–49 (MYPPPPAPAPHRDFISVTLSLGESYDNSKSRRRRSCWRKWKQLSRLQRN) are Cytoplasmic-facing. The chain crosses the membrane as a helical span at residues 50–70 (VILFVLGFLILCGFLYSLQVS). Over 71 to 657 (DQWKALSGSR…AHPLPIWSPA (587 aa)) the chain is Lumenal. Serine 101 carries the phosphoserine modification. Residues 118–157 (HLRRGPPHLQIRPPNTVSKDGMQDDAKEREAALGKAQQEE) are disordered. Basic and acidic residues predominate over residues 138–157 (GMQDDAKEREAALGKAQQEE). Catalysis depends on glutamate 288, which acts as the Proton donor. Aspartate 421 is a catalytic residue. The cysteines at positions 485 and 514 are disulfide-linked. Glutamate 528 functions as the Proton donor in the catalytic mechanism. The active site involves glutamate 557. Position 646 (threonine 646) interacts with Ca(2+).

Belongs to the glycosyl hydrolase 47 family. Ca(2+) serves as cofactor.

It is found in the endoplasmic reticulum membrane. It carries out the reaction N(4)-(alpha-D-Man-(1-&gt;2)-alpha-D-Man-(1-&gt;2)-alpha-D-Man-(1-&gt;3)-[alpha-D-Man-(1-&gt;2)-alpha-D-Man-(1-&gt;3)-[alpha-D-Man-(1-&gt;2)-alpha-D-Man-(1-&gt;6)]-alpha-D-Man-(1-&gt;6)]-beta-D-Man-(1-&gt;4)-beta-D-GlcNAc-(1-&gt;4)-beta-D-GlcNAc)-L-asparaginyl-[protein] (N-glucan mannose isomer 9A1,2,3B1,2,3) + 4 H2O = N(4)-(alpha-D-Man-(1-&gt;3)-[alpha-D-Man-(1-&gt;3)-[alpha-D-Man-(1-&gt;6)]-alpha-D-Man-(1-&gt;6)]-beta-D-Man-(1-&gt;4)-beta-D-GlcNAc-(1-&gt;4)-beta-D-GlcNAc)-L-asparaginyl-[protein] (N-glucan mannose isomer 5A1,2) + 4 beta-D-mannose. It catalyses the reaction N(4)-(alpha-D-Man-(1-&gt;2)-alpha-D-Man-(1-&gt;2)-alpha-D-Man-(1-&gt;3)-[alpha-D-Man-(1-&gt;3)-[alpha-D-Man-(1-&gt;2)-alpha-D-Man-(1-&gt;6)]-alpha-D-Man-(1-&gt;6)]-beta-D-Man-(1-&gt;4)-beta-D-GlcNAc-(1-&gt;4)-beta-D-GlcNAc)-L-asparaginyl-[protein] (N-glucan mannose isomer 8A1,2,3B1,3) + 3 H2O = N(4)-(alpha-D-Man-(1-&gt;3)-[alpha-D-Man-(1-&gt;3)-[alpha-D-Man-(1-&gt;6)]-alpha-D-Man-(1-&gt;6)]-beta-D-Man-(1-&gt;4)-beta-D-GlcNAc-(1-&gt;4)-beta-D-GlcNAc)-L-asparaginyl-[protein] (N-glucan mannose isomer 5A1,2) + 3 beta-D-mannose. Its pathway is protein modification; protein glycosylation. Involved in glycoprotein quality control targeting of misfolded glycoproteins for degradation. It primarily trims a single alpha-1,2-linked mannose residue from Man(9)GlcNAc(2) to produce Man(8)GlcNAc(2), but at high enzyme concentrations, as found in the ER quality control compartment (ERQC), it further trims the carbohydrates to Man(5-6)GlcNAc(2). This chain is Endoplasmic reticulum mannosyl-oligosaccharide 1,2-alpha-mannosidase (Man1b1), found in Rattus norvegicus (Rat).